We begin with the raw amino-acid sequence, 167 residues long: Insertion element IS1 2 protein InsB (167 aa).

The protein belongs to the transposase 27 family.

Functionally, absolutely required for transposition of IS1. The chain is Insertion element IS1 2 protein InsB (insB2) from Escherichia coli (strain K12).